A 203-amino-acid chain; its full sequence is Cytochrome c oxidase assembly protein CtaG (203 aa).

Topologically, residues 1–16 (MADQQEKDQKLKKQQR) are cytoplasmic. The chain crosses the membrane as a helical; Signal-anchor for type II membrane protein span at residues 17 to 39 (SNATIAFACLSFFVCMIGAAYAS). Over 40-203 (VPLYRIFCQV…VKAETPTNGS (164 aa)) the chain is Periplasmic.

It belongs to the COX11/CtaG family.

Its subcellular location is the cell inner membrane. Its function is as follows. Exerts its effect at some terminal stage of cytochrome c oxidase synthesis, probably by being involved in the insertion of the copper B into subunit I. The protein is Cytochrome c oxidase assembly protein CtaG of Brucella anthropi (strain ATCC 49188 / DSM 6882 / CCUG 24695 / JCM 21032 / LMG 3331 / NBRC 15819 / NCTC 12168 / Alc 37) (Ochrobactrum anthropi).